The sequence spans 239 residues: ATP-dependent dethiobiotin synthetase BioD (239 aa).

15-20 (EIGKTF) contributes to the ATP binding site. Thr19 contacts Mg(2+). Lys40 is an active-site residue. ATP is bound by residues Asp57, 118-121 (EGAG), and 178-179 (NH). The Mg(2+) site is built by Asp57 and Glu118.

Belongs to the dethiobiotin synthetase family. Homodimer. It depends on Mg(2+) as a cofactor.

The protein resides in the cytoplasm. The enzyme catalyses (7R,8S)-7,8-diammoniononanoate + CO2 + ATP = (4R,5S)-dethiobiotin + ADP + phosphate + 3 H(+). Its pathway is cofactor biosynthesis; biotin biosynthesis; biotin from 7,8-diaminononanoate: step 1/2. Functionally, catalyzes a mechanistically unusual reaction, the ATP-dependent insertion of CO2 between the N7 and N8 nitrogen atoms of 7,8-diaminopelargonic acid (DAPA, also called 7,8-diammoniononanoate) to form a ureido ring. The chain is ATP-dependent dethiobiotin synthetase BioD from Burkholderia lata (strain ATCC 17760 / DSM 23089 / LMG 22485 / NCIMB 9086 / R18194 / 383).